We begin with the raw amino-acid sequence, 503 residues long: MNQKKISLFGFFALTASMVLTVYEYPTFATSKLHLVFFLLLGGLLWFLPVALCAAEMATVEGWKNGGIFSWVSQTLGERFGFAAIFFQWFQITVGFVTMIYFILGALSYVLNFQALNTDPLIKFIGLLIIFWGLTFSQLGGTQRTAKLVKAGFVVGIVIPSIILFGLAAAYFIGGNPIEIPINKHAFVPDFSQVSTLVVFVSFILAYMGVEASASHINELENPKRNYPLAMILLVILAISLDAIGGFSVAAVIPQKDLSLSAGVIQTFQTLILHFNHHLGWLVKVIALMIAFGVMGEVSSWVVGPSRGMFAAAQRGLLPKFLRKTNTHEVPVPLVMIQGIIVTLWGAVLTFGGGGNNLSFLVAISLTVVIYLVGYLLFFIGYFVLIYKKQNLKRTYNVPGKRVGKTIIAGIGFLLSIFALFISFVPPASIAKNETHTYQMILLISFVVTAILPFIVYELHDKRGHDTIEEPRHFKARDVNPAIYPAARGEHHIIKKEEHILKH.

33–43 contacts L-glutamate; that stretch reads LHLVFFLLLGG. 7 helical membrane passes run 35–55, 153–173, 194–214, 232–252, 366–386, 407–427, and 440–460; these read LVFFLLLGGLLWFLPVALCAA, FVVGIVIPSIILFGLAAAYFI, VSTLVVFVSFILAYMGVEASA, ILLVILAISLDAIGGFSVAAV, LTVVIYLVGYLLFFIGYFVLI, IIAGIGFLLSIFALFISFVPP, and MILLISFVVTAILPFIVYELH.

This sequence belongs to the amino acid-polyamine-organocation (APC) superfamily. Glutamate:GABA antiporter (GGA) (TC 2.A.3.7) family.

Its subcellular location is the cell membrane. It catalyses the reaction 4-aminobutanoate(in) + L-glutamate(out) = 4-aminobutanoate(out) + L-glutamate(in). In terms of biological role, involved in glutaminase-dependent acid resistance. Exchanges extracellular glutamate (Glu) for intracellular gamma-aminobutyric acid (GABA) under acidic conditions. The protein is Glutamate/gamma-aminobutyrate antiporter (gadC) of Lactococcus lactis subsp. lactis (strain IL1403) (Streptococcus lactis).